Consider the following 733-residue polypeptide: Phosphoribosylformylglycinamidine synthase subunit PurL (733 aa).

Histidine 41 is an active-site residue. The ATP site is built by tyrosine 44 and lysine 83. A Mg(2+)-binding site is contributed by glutamate 85. Substrate contacts are provided by residues 86–89 and arginine 108; that span reads SHNH. The active-site Proton acceptor is histidine 87. Aspartate 109 provides a ligand contact to Mg(2+). The segment at 212–232 is disordered; the sequence is GASFASQELSEESEEKRPSVQ. Glutamine 232 serves as a coordination point for substrate. Aspartate 260 contacts Mg(2+). 304–306 is a substrate binding site; it reads ESQ. Aspartate 488 and glycine 525 together coordinate ATP. Asparagine 526 is a binding site for Mg(2+). Residue serine 528 participates in substrate binding.

This sequence belongs to the FGAMS family. In terms of assembly, monomer. Part of the FGAM synthase complex composed of 1 PurL, 1 PurQ and 2 PurS subunits.

It localises to the cytoplasm. It catalyses the reaction N(2)-formyl-N(1)-(5-phospho-beta-D-ribosyl)glycinamide + L-glutamine + ATP + H2O = 2-formamido-N(1)-(5-O-phospho-beta-D-ribosyl)acetamidine + L-glutamate + ADP + phosphate + H(+). The protein operates within purine metabolism; IMP biosynthesis via de novo pathway; 5-amino-1-(5-phospho-D-ribosyl)imidazole from N(2)-formyl-N(1)-(5-phospho-D-ribosyl)glycinamide: step 1/2. Its function is as follows. Part of the phosphoribosylformylglycinamidine synthase complex involved in the purines biosynthetic pathway. Catalyzes the ATP-dependent conversion of formylglycinamide ribonucleotide (FGAR) and glutamine to yield formylglycinamidine ribonucleotide (FGAM) and glutamate. The FGAM synthase complex is composed of three subunits. PurQ produces an ammonia molecule by converting glutamine to glutamate. PurL transfers the ammonia molecule to FGAR to form FGAM in an ATP-dependent manner. PurS interacts with PurQ and PurL and is thought to assist in the transfer of the ammonia molecule from PurQ to PurL. The chain is Phosphoribosylformylglycinamidine synthase subunit PurL from Caldanaerobacter subterraneus subsp. tengcongensis (strain DSM 15242 / JCM 11007 / NBRC 100824 / MB4) (Thermoanaerobacter tengcongensis).